The primary structure comprises 3102 residues: Laminin subunit alpha lam-3 (3102 aa).

Residues 1–16 form the signal peptide; that stretch reads MRLWLGLLAVSNIALG. Asn-19, Asn-135, and Asn-237 each carry an N-linked (GlcNAc...) asparagine glycan. The Laminin N-terminal domain maps to 44–295; sequence SERGLFPNIF…SISDISIGGQ (252 aa). 16 cysteine pairs are disulfide-bonded: Cys-296–Cys-305, Cys-298–Cys-316, Cys-318–Cys-327, Cys-330–Cys-350, Cys-353–Cys-362, Cys-355–Cys-387, Cys-390–Cys-399, Cys-402–Cys-420, Cys-423–Cys-435, Cys-425–Cys-451, Cys-453–Cys-462, Cys-465–Cys-475, Cys-478–Cys-491, Cys-480–Cys-496, Cys-498–Cys-507, and Cys-510–Cys-525. Laminin EGF-like domains are found at residues 296–352, 353–422, 423–477, and 478–527; these read CICY…VCQQ, CQCF…ACRT, CECD…TCEP, and CPCN…GCQP. The region spanning 548–740 is the Laminin IV type A 1 domain; sequence INNIGWHLTD…QDTLMGGVEV (193 aa). Cystine bridges form between Cys-774-Cys-783, Cys-776-Cys-790, Cys-793-Cys-802, Cys-805-Cys-822, Cys-825-Cys-838, Cys-827-Cys-858, Cys-861-Cys-870, Cys-873-Cys-886, Cys-889-Cys-903, Cys-891-Cys-910, Cys-913-Cys-922, Cys-925-Cys-938, Cys-941-Cys-953, Cys-943-Cys-960, Cys-962-Cys-971, Cys-974-Cys-985, Cys-988-Cys-1000, Cys-990-Cys-1007, Cys-1009-Cys-1018, Cys-1021-Cys-1033, Cys-1036-Cys-1049, Cys-1038-Cys-1056, Cys-1058-Cys-1067, Cys-1070-Cys-1083, Cys-1086-Cys-1098, Cys-1088-Cys-1105, Cys-1107-Cys-1116, Cys-1119-Cys-1131, Cys-1134-Cys-1144, Cys-1137-Cys-1151, and Cys-1153-Cys-1162. 10 Laminin EGF-like domains span residues 774–824, 825–888, 889–940, 941–987, 988–1035, 1036–1085, 1086–1133, 1134–1180, 1181–1226, and 1227–1283; these read CDCH…ACEQ, CECP…KCIE, CTCN…TCKP, CGCH…GCPA, CDCN…GCQF, CHCN…GCED, CGCD…GCTE, CEPC…GCKL, CDCS…TCEP, and CGCN…GCTE. An N-linked (GlcNAc...) asparagine glycan is attached at Asn-796. A glycan (N-linked (GlcNAc...) asparagine) is linked at Asn-991. N-linked (GlcNAc...) asparagine glycosylation occurs at Asn-1027. Residue Asn-1076 is glycosylated (N-linked (GlcNAc...) asparagine). An N-linked (GlcNAc...) asparagine glycan is attached at Asn-1164. 9 cysteine pairs are disulfide-bonded: Cys-1165–Cys-1178, Cys-1181–Cys-1193, Cys-1183–Cys-1200, Cys-1202–Cys-1211, Cys-1214–Cys-1224, Cys-1227–Cys-1246, Cys-1229–Cys-1252, Cys-1254–Cys-1263, and Cys-1266–Cys-1281. Residue Asn-1288 is glycosylated (N-linked (GlcNAc...) asparagine). A Laminin IV type A 2 domain is found at 1295-1496; it reads QSDLVWQQMY…STTKAIGVEK (202 aa). 12 disulfide bridges follow: Cys-1540/Cys-1549, Cys-1542/Cys-1556, Cys-1559/Cys-1568, Cys-1571/Cys-1587, Cys-1590/Cys-1603, Cys-1592/Cys-1614, Cys-1617/Cys-1626, Cys-1629/Cys-1644, Cys-1647/Cys-1659, Cys-1649/Cys-1666, Cys-1668/Cys-1677, and Cys-1680/Cys-1691. Laminin EGF-like domains follow at residues 1540–1589, 1590–1646, and 1647–1693; these read CSCH…ACTK, CACP…TCSP, and CDCH…VCTS. Asn-1717, Asn-1734, Asn-1777, Asn-1806, Asn-1839, Asn-1875, Asn-1969, Asn-1984, and Asn-2048 each carry an N-linked (GlcNAc...) asparagine glycan. The tract at residues 2061–2084 is disordered; that stretch reads EAVSKMLGSEGSESGDANEESLRS. N-linked (GlcNAc...) asparagine glycosylation is found at Asn-2091, Asn-2193, Asn-2369, and Asn-2479. Laminin G-like domains lie at 2467–2644, 2652–2839, and 2913–3088; these read SQRG…TDGC, DKII…IGMC, and RYGL…AKAC. Residues Cys-2617 and Cys-2644 are joined by a disulfide bond. Asn-2672 and Asn-2686 each carry an N-linked (GlcNAc...) asparagine glycan. The cysteines at positions 2814 and 2839 are disulfide-linked. N-linked (GlcNAc...) asparagine glycosylation is found at Asn-2932, Asn-2959, and Asn-3007. Cys-3058 and Cys-3088 form a disulfide bridge.

Laminin is a complex glycoprotein, consisting of three different polypeptide chains (alpha, beta, gamma), which are bound to each other by disulfide bonds into a cross-shaped molecule comprising one long and three short arms with globules at each end.

It localises to the secreted. It is found in the extracellular space. The protein localises to the extracellular matrix. The protein resides in the basement membrane. In terms of biological role, binding to cells via a high affinity receptor, laminin is thought to mediate the attachment, migration and organization of cells into tissues during embryonic development by interacting with other extracellular matrix components. Required to assemble a stable basement membrane and for organizing receptor complexes and cytoskeletal components to the proper cell surfaces. During embryogenesis, does not require the presence of collagen type IV in order to associate with cell surfaces, prior to assembly of the prototypical basement membrane. Plays an important role in muscle contraction of the body. Probably plays a distinct role from the related laminin subunit alpha epi-1. This is Laminin subunit alpha lam-3 from Caenorhabditis elegans.